The chain runs to 323 residues: Ferrochelatase (323 aa).

Fe cation is bound by residues His-196 and Glu-277.

It belongs to the ferrochelatase family.

Its subcellular location is the cytoplasm. The enzyme catalyses heme b + 2 H(+) = protoporphyrin IX + Fe(2+). It participates in porphyrin-containing compound metabolism; protoheme biosynthesis; protoheme from protoporphyrin-IX: step 1/1. Its function is as follows. Catalyzes the ferrous insertion into protoporphyrin IX. The chain is Ferrochelatase from Haemophilus influenzae (strain 86-028NP).